Reading from the N-terminus, the 360-residue chain is Transcriptional coactivator MYCFIDRAFT_190109 (360 aa).

An HTH iclR-type domain is found at 3-67; it reads GMALNQLLAC…GFLHEPRPGQ (65 aa). The H-T-H motif DNA-binding region spans 33 to 52; that stretch reads ARDVADLTGVPETQLCRVVR.

It is found in the nucleus. Transcriptional coactivator; part of the gene cluster that mediates the biosynthesis of an emodin derivative that may be involved in black Sigatoka disease of banana. With MYCFIDRAFT_198930, coregulates the production of the PKS8-1 cluster product. This chain is Transcriptional coactivator MYCFIDRAFT_190109, found in Pseudocercospora fijiensis (strain CIRAD86) (Black leaf streak disease fungus).